A 134-amino-acid chain; its full sequence is Histone H2A (134 aa).

Gly residues predominate over residues 1-10; the sequence is MTGGKSGGKA. The interval 1–26 is disordered; sequence MTGGKSGGKASGSKSSAQSRSSKAGL. Lysine 5 and lysine 9 each carry N6-acetyllysine. Residues 11–25 are compositionally biased toward low complexity; that stretch reads SGSKSSAQSRSSKAG. Glutamine 107 carries the N5-methylglutamine modification. Serine 131 carries the post-translational modification Phosphoserine. The [ST]-Q motif motif lies at 131–132; it reads SQ.

The protein belongs to the histone H2A family. As to quaternary structure, the nucleosome is a histone octamer containing two molecules each of H2A, H2B, H3 and H4 assembled in one H3-H4 heterotetramer and two H2A-H2B heterodimers. The octamer wraps approximately 147 bp of DNA. In terms of processing, phosphorylated to form H2AS128ph (gamma-H2A) in response to DNA double-strand breaks (DSBs) generated by exogenous genotoxic agents and by stalled replication forks. Phosphorylation is dependent on the DNA damage checkpoint kinases MEC1/ATR and TEL1/ATM, spreads on either side of a detected DSB site and may mark the surrounding chromatin for recruitment of proteins required for DNA damage signaling and repair. Gamma-H2A is removed from the DNA prior to the strand invasion-primer extension step of the repair process and subsequently dephosphorylated. Dephosphorylation is necessary for efficient recovery from the DNA damage checkpoint. Acetylated by ESA1 to form H2AK4ac and H2AK7ac.

It is found in the nucleus. The protein localises to the chromosome. In terms of biological role, core component of nucleosome which plays a central role in DNA double strand break (DSB) repair. Nucleosomes wrap and compact DNA into chromatin, limiting DNA accessibility to the cellular machineries which require DNA as a template. Histones thereby play a central role in transcription regulation, DNA repair, DNA replication and chromosomal stability. DNA accessibility is regulated via a complex set of post-translational modifications of histones, also called histone code, and nucleosome remodeling. This chain is Histone H2A (HTA1), found in Phaeosphaeria nodorum (strain SN15 / ATCC MYA-4574 / FGSC 10173) (Glume blotch fungus).